Consider the following 156-residue polypeptide: 6,7-dimethyl-8-ribityllumazine synthase (156 aa).

5-amino-6-(D-ribitylamino)uracil is bound by residues Phe22, 57 to 59, and 81 to 83; these read AVE and TVI. 86–87 lines the (2S)-2-hydroxy-3-oxobutyl phosphate pocket; that stretch reads GT. His89 serves as the catalytic Proton donor. Phe114 provides a ligand contact to 5-amino-6-(D-ribitylamino)uracil. Arg128 contacts (2S)-2-hydroxy-3-oxobutyl phosphate.

This sequence belongs to the DMRL synthase family. Forms an icosahedral capsid composed of 60 subunits, arranged as a dodecamer of pentamers.

The catalysed reaction is (2S)-2-hydroxy-3-oxobutyl phosphate + 5-amino-6-(D-ribitylamino)uracil = 6,7-dimethyl-8-(1-D-ribityl)lumazine + phosphate + 2 H2O + H(+). The protein operates within cofactor biosynthesis; riboflavin biosynthesis; riboflavin from 2-hydroxy-3-oxobutyl phosphate and 5-amino-6-(D-ribitylamino)uracil: step 1/2. Its function is as follows. Catalyzes the formation of 6,7-dimethyl-8-ribityllumazine by condensation of 5-amino-6-(D-ribitylamino)uracil with 3,4-dihydroxy-2-butanone 4-phosphate. This is the penultimate step in the biosynthesis of riboflavin. The sequence is that of 6,7-dimethyl-8-ribityllumazine synthase from Vibrio campbellii (strain ATCC BAA-1116).